The following is a 278-amino-acid chain: Nudix hydrolase 2 (278 aa).

A Nudix hydrolase domain is found at 110-242 (SHRVGIGAFV…ELLRYMTDIC (133 aa)). The short motif at 147–168 (GVVNEGEDIHDGSVREVKEETG) is the Nudix box element. A Mg(2+)-binding site is contributed by glutamate 162. Glutamate 165 functions as the Proton acceptor in the catalytic mechanism. Glutamate 166 serves as a coordination point for Mg(2+).

This sequence belongs to the Nudix hydrolase family. It depends on Mg(2+) as a cofactor. The cofactor is Mn(2+). Expressed in roots, stems and leaves.

It catalyses the reaction ADP-D-ribose + H2O = D-ribose 5-phosphate + AMP + 2 H(+). The enzyme catalyses NAD(+) + H2O = beta-nicotinamide D-ribonucleotide + AMP + 2 H(+). It carries out the reaction NADH + H2O = reduced beta-nicotinamide D-ribonucleotide + AMP + 2 H(+). In terms of biological role, probably mediates the hydrolysis of some nucleoside diphosphate derivatives. In vitro, it can use both NADH and ADP-ribose as substrates; however the relevance of such substrates in vivo is unclear. Confers tolerance to oxidative stress. The chain is Nudix hydrolase 2 from Arabidopsis thaliana (Mouse-ear cress).